A 1346-amino-acid polypeptide reads, in one-letter code: Proline-rich protein 36 (1346 aa).

Disordered regions lie at residues Met-1–Ile-403, Ser-426–Pro-512, Pro-537–Leu-606, Pro-633–Leu-679, Leu-711–Ala-1155, and Pro-1168–Lys-1240. Low complexity predominate over residues Ala-10–Thr-26. Pro residues predominate over residues Pro-27 to Thr-40. Composition is skewed to low complexity over residues Pro-41–Arg-55 and Ser-86–Ser-97. Residues Ser-137–Lys-152 show a composition bias toward basic and acidic residues. A compositionally biased stretch (low complexity) spans Ser-165–Ala-177. The span at Arg-191–Glu-203 shows a compositional bias: pro residues. Over residues Ser-208–Pro-220 the composition is skewed to polar residues. 2 stretches are compositionally biased toward low complexity: residues Gln-235 to Ser-255 and Ala-293 to Thr-312. Pro residues-rich tracts occupy residues Ala-329–Ala-343, Pro-371–Pro-380, and Pro-387–Val-397. Over residues Ser-426–Leu-464 the composition is skewed to low complexity. The segment covering Thr-494 to Pro-506 has biased composition (pro residues). Residues Pro-546–Pro-558 are compositionally biased toward low complexity. Over residues Leu-559–Ala-578 the composition is skewed to pro residues. A compositionally biased stretch (polar residues) spans Pro-633–Ala-647. Residues Ser-648 to Gln-657 are compositionally biased toward pro residues. Low complexity predominate over residues Ala-658 to Leu-679. Residues Thr-724–Pro-733 are compositionally biased toward polar residues. 2 stretches are compositionally biased toward pro residues: residues Glu-781 to Ala-821 and Pro-829 to Ser-865. The segment covering Pro-866–Pro-875 has biased composition (low complexity). Composition is skewed to pro residues over residues Phe-887 to Ala-917, Leu-926 to Ser-997, and Ala-1004 to Ala-1015. Low complexity-rich tracts occupy residues Phe-1029–Leu-1046, Asp-1137–Ala-1146, and Gly-1224–Pro-1239. Ser-1310 carries the post-translational modification Phosphoserine.

This is Proline-rich protein 36 from Homo sapiens (Human).